The primary structure comprises 341 residues: tRNA N6-adenosine threonylcarbamoyltransferase (341 aa).

The Fe cation site is built by His111 and His115. Residues 134–138 (LVSGG), Asp167, Gly180, and Asn276 each bind substrate. Asp304 is a binding site for Fe cation.

Belongs to the KAE1 / TsaD family. It depends on Fe(2+) as a cofactor.

Its subcellular location is the cytoplasm. The catalysed reaction is L-threonylcarbamoyladenylate + adenosine(37) in tRNA = N(6)-L-threonylcarbamoyladenosine(37) in tRNA + AMP + H(+). Required for the formation of a threonylcarbamoyl group on adenosine at position 37 (t(6)A37) in tRNAs that read codons beginning with adenine. Is involved in the transfer of the threonylcarbamoyl moiety of threonylcarbamoyl-AMP (TC-AMP) to the N6 group of A37, together with TsaE and TsaB. TsaD likely plays a direct catalytic role in this reaction. This is tRNA N6-adenosine threonylcarbamoyltransferase from Pseudomonas fluorescens (strain SBW25).